Consider the following 383-residue polypeptide: Oxysterol-binding protein-related protein 4B (383 aa).

The protein belongs to the OSBP family. Expressed in stems and flowers.

In terms of biological role, may be involved in the transport of sterols. This Arabidopsis thaliana (Mouse-ear cress) protein is Oxysterol-binding protein-related protein 4B (ORP4B).